The sequence spans 558 residues: Ankyrin repeat protein OPG189 (558 aa).

ANK repeat units lie at residues 65–95 (YGEN…NINK), 169–205 (YGCT…DVDK), 209–239 (YGNT…NIDS), 243–272 (NRYT…NVNA), 276–304 (FGTT…ELEI), 339–368 (YNET…DFET), and 372–401 (SGCT…SLKI).

It belongs to the orthopoxvirus OPG189 protein family.

In terms of biological role, contributes to viral release without involving rearrangement of host actin. In Homo sapiens (Human), this protein is Ankyrin repeat protein OPG189 (OPG189).